The chain runs to 160 residues: MSVIKKPDLTDPKLRAKLAKGMGHNYYGEPAWPNDLLYVFPVCILGTFACCIGLAVMAPTQMGEPADPFNTPLEILPEWYFFPTFNLLRVLPNKLLGVLAMARVPAGLITVPFIENVNKFQNPFRRPIASLVFILGFFTAVWLGIGACLPIDKAVSLGFW.

Helical transmembrane passes span 36–56, 95–115, and 131–151; these read LLYV…GLAV, LLGV…PFIE, and LVFI…CLPI.

Belongs to the cytochrome b family. PetD subfamily. In terms of assembly, the 4 large subunits of the cytochrome b6-f complex are cytochrome b6, subunit IV (17 kDa polypeptide, petD), cytochrome f and the Rieske protein, while the 4 small subunits are petG, petL, petM and petN. The complex functions as a dimer.

It localises to the plastid. The protein resides in the chloroplast thylakoid membrane. In terms of biological role, component of the cytochrome b6-f complex, which mediates electron transfer between photosystem II (PSII) and photosystem I (PSI), cyclic electron flow around PSI, and state transitions. This chain is Cytochrome b6-f complex subunit 4, found in Trieres chinensis (Marine centric diatom).